The primary structure comprises 298 residues: MKNRTFSVFYRKYEQILEKEILSSEIPEHIAVIMDGNRRYAGQLGKARIFGHAMGAEVTEQVIEWCYEIGVKQLTLYAFSTENFQRSEEEVGGLFNLINEKFLKLHTDKRTYEKEMQVRVIGDRTKLPAYLNESIDRIEKATEHHRKFSLNVAIAYGGRQDIMQAVRDIATCVSSGKLSLEDVNESLISKHLYPAPGVPVPNVDLIIRTGGDERISNFLPWQANGSECATYFCAPFWPEFRKIDLLRSVRVYQARKEEKKREHSYRISKVKNFLRVGKYENKSEDLGQLLPLKKQGVS.

D35 is an active-site residue. Residue D35 coordinates Mg(2+). Residues 36–39, R48, H52, and 80–82 each bind substrate; these read GNRR and STE. N83 acts as the Proton acceptor in catalysis. Substrate contacts are provided by residues F84, R86, R208, and 214–216; that span reads RIS.

The protein belongs to the UPP synthase family. In terms of assembly, homodimer. Mg(2+) serves as cofactor.

The enzyme catalyses geranylgeranyl diphosphate + 7 isopentenyl diphosphate = tri-trans,hepta-cis-undecaprenyl diphosphate + 7 diphosphate. Its function is as follows. Catalyzes the sequential condensation of isopentenyl diphosphate (IPP) with geranylgeranyl diphosphate (GGPP) to yield (2Z,6Z,10Z,14Z,18Z,22Z,26Z,30E,34E,38E)-undecaprenyl diphosphate (tritrans,heptacis-UPP). It is probably the precursor of glycosyl carrier lipids. The polypeptide is Tritrans,polycis-undecaprenyl-diphosphate synthase (geranylgeranyl-diphosphate specific) (Methanosarcina mazei (strain ATCC BAA-159 / DSM 3647 / Goe1 / Go1 / JCM 11833 / OCM 88) (Methanosarcina frisia)).